The primary structure comprises 424 residues: DUF21 domain-containing protein At4g33700 (424 aa).

Topologically, residues 1-11 are extracellular; sequence MAVEYVCCSPN. Residues 8–191 enclose the CNNM transmembrane domain; the sequence is CSPNFFIHIA…GKGGELTHDE (184 aa). A helical transmembrane segment spans residues 12–32; it reads FFIHIAVIVFLVLFAGLMSGL. The Cytoplasmic segment spans residues 33 to 70; that stretch reads TLGLMSLSLVDLEVLAKSGTPEHRKYAAKILPVVKNQH. The chain crosses the membrane as a helical span at residues 71-91; sequence LLLVTLLICNAAAMETLPIFL. Residues 92-94 are Extracellular-facing; sequence DGL. A helical membrane pass occupies residues 95–115; that stretch reads VTAWGAILISVTLILLFGEII. The Cytoplasmic portion of the chain corresponds to 116–136; that stretch reads PQSICSRYGLAIGATVAPFVR. Residues 137–157 form a helical membrane-spanning segment; sequence VLVFICLPVAWPISKLLDFLL. Residues 158–424 are Extracellular-facing; that stretch reads GHRRAALFRR…DETDHHFEDS (267 aa). Residues 210–271 enclose the CBS 1 domain; the sequence is MTPISDIFVI…TINPDEEIPV (62 aa). N-linked (GlcNAc...) asparagine glycans are attached at residues Asn-273 and Asn-319. CBS domains are found at residues 275–331 and 355–416; these read TIRR…DVDS and PNRA…IFDE. 2 disordered regions span residues 321–340 and 355–374; these read SVKE…PQER and PNRA…SKDN. Ser-331 carries the phosphoserine modification.

It localises to the membrane. This is DUF21 domain-containing protein At4g33700 (CBSDUF6) from Arabidopsis thaliana (Mouse-ear cress).